A 73-amino-acid chain; its full sequence is Putative membrane protein insertion efficiency factor (73 aa).

It belongs to the UPF0161 family.

The protein localises to the cell inner membrane. Could be involved in insertion of integral membrane proteins into the membrane. The chain is Putative membrane protein insertion efficiency factor from Phocaeicola vulgatus (strain ATCC 8482 / DSM 1447 / JCM 5826 / CCUG 4940 / NBRC 14291 / NCTC 11154) (Bacteroides vulgatus).